The following is an 84-amino-acid chain: Small ribosomal subunit protein uS17 (84 aa).

It belongs to the universal ribosomal protein uS17 family. In terms of assembly, part of the 30S ribosomal subunit.

Functionally, one of the primary rRNA binding proteins, it binds specifically to the 5'-end of 16S ribosomal RNA. The protein is Small ribosomal subunit protein uS17 of Legionella pneumophila (strain Paris).